We begin with the raw amino-acid sequence, 249 residues long: MRIENKQNKRQHHLLIVDDENNIRKILQTRLTLLGYSVSTACNGEEALKIFTTHSIDLIILDVMMPKLDGYGVCQEIRKESDIPIIMLTALEDVLDKVTGLELGADDYVIKPFSPRELEARIQSILRRIQTRNAKLKPYDNINLFKTGSLNIDLEKKQIYKNNELIRLTEMEFSLLELLVSQSGKAFSRSKILKEVWGYKLSKHEPIADTRIVDVHISRLRAKLEDDPTNPTLILTARGTGYLCRKLIT.

The Response regulatory domain occupies 13–126 (HLLIVDDENN…ELEARIQSIL (114 aa)). Aspartate 62 carries the post-translational modification 4-aspartylphosphate. A DNA-binding region (H-T-H motif) is located at residues 82-100 (DIPIIMLTALEDVLDKVTG). The segment at residues 142-246 (INLFKTGSLN…ARGTGYLCRK (105 aa)) is a DNA-binding region (ompR/PhoB-type).

It localises to the plastid. The protein resides in the chloroplast. Probable promoter-specific protein mediating the interaction between DNA and RNA polymerase. The polypeptide is Probable transcriptional regulator ycf27 (ycf27) (Cyanidium caldarium (Red alga)).